Reading from the N-terminus, the 219-residue chain is Leucyl/phenylalanyl-tRNA--protein transferase (219 aa).

Belongs to the L/F-transferase family.

The protein resides in the cytoplasm. It catalyses the reaction N-terminal L-lysyl-[protein] + L-leucyl-tRNA(Leu) = N-terminal L-leucyl-L-lysyl-[protein] + tRNA(Leu) + H(+). The enzyme catalyses N-terminal L-arginyl-[protein] + L-leucyl-tRNA(Leu) = N-terminal L-leucyl-L-arginyl-[protein] + tRNA(Leu) + H(+). It carries out the reaction L-phenylalanyl-tRNA(Phe) + an N-terminal L-alpha-aminoacyl-[protein] = an N-terminal L-phenylalanyl-L-alpha-aminoacyl-[protein] + tRNA(Phe). In terms of biological role, functions in the N-end rule pathway of protein degradation where it conjugates Leu, Phe and, less efficiently, Met from aminoacyl-tRNAs to the N-termini of proteins containing an N-terminal arginine or lysine. This is Leucyl/phenylalanyl-tRNA--protein transferase from Leptospira borgpetersenii serovar Hardjo-bovis (strain JB197).